The following is a 503-amino-acid chain: Betaine aldehyde dehydrogenase 2 (503 aa).

161–170 (WNYPLLMATW) is a binding site for betaine aldehyde. 238-243 (GSYETG) is an NAD(+) binding site. Betaine aldehyde-binding positions include glutamate 260, 292 to 295 (QICS), and cysteine 453. Catalysis depends on residues glutamate 260 and cysteine 294. 4-aminobutanal-binding positions include 260-261 (EL) and cysteine 294. Tryptophan 459 provides a ligand contact to 4-aminobutanal. Positions 501–503 (SKL) match the Microbody targeting signal motif.

The protein belongs to the aldehyde dehydrogenase family. In terms of assembly, homodimer.

The protein localises to the peroxisome. The protein resides in the cytoplasm. The enzyme catalyses betaine aldehyde + NAD(+) + H2O = glycine betaine + NADH + 2 H(+). Its pathway is amine and polyamine biosynthesis; betaine biosynthesis via choline pathway; betaine from betaine aldehyde: step 1/1. In terms of biological role, dehydrogenase that can use N-acetyl-c-aminobutyraldehyde (NAGABald), gamma-guanidinobutyraldehyde (GGBald), betaine aldehyde (Bet-ald), gamma-aminobutyraldehyde (GAB-ald), acetaldehyde, 4-aminobutylaldehyde (AB-ald), 3-aminopropionaldehyde (AP-ald), 4-N-trimethylaminobutyraldehyde (TMAB-ald) and 3-N-trimethylaminopropionaldehyde (TMAP-ald) as substrates. Catalyzes the oxidation of GAB-ald more efficiently than Bet-ald. Mediates the conversion of GAB-ald into gamma-aminobutyric acid (GABA), and prevents the formation of 2-acetyl-1-pyrroline (2AP) which gives fragrant rice its aromatic properties. In Oryza sativa subsp. indica (Rice), this protein is Betaine aldehyde dehydrogenase 2 (BADH2).